The sequence spans 337 residues: Nodulation protein D 2 (337 aa).

Residues leucine 6–threonine 63 enclose the HTH lysR-type domain. Positions leucine 23–alanine 42 form a DNA-binding region, H-T-H motif.

Belongs to the LysR transcriptional regulatory family.

Functionally, nodD regulates the expression of the nodABCFE genes which encode other nodulation proteins. NodD is also a negative regulator of its own expression. Binds flavonoids as inducers. This is Nodulation protein D 2 (nodD2) from Bradyrhizobium sp. (strain NC92).